A 258-amino-acid polypeptide reads, in one-letter code: Thiazole synthase (258 aa).

The active-site Schiff-base intermediate with DXP is K98. 1-deoxy-D-xylulose 5-phosphate-binding positions include G159, 185–186 (AG), and 207–208 (NT).

This sequence belongs to the ThiG family. Homotetramer. Forms heterodimers with either ThiH or ThiS.

It is found in the cytoplasm. It carries out the reaction [ThiS sulfur-carrier protein]-C-terminal-Gly-aminoethanethioate + 2-iminoacetate + 1-deoxy-D-xylulose 5-phosphate = [ThiS sulfur-carrier protein]-C-terminal Gly-Gly + 2-[(2R,5Z)-2-carboxy-4-methylthiazol-5(2H)-ylidene]ethyl phosphate + 2 H2O + H(+). It functions in the pathway cofactor biosynthesis; thiamine diphosphate biosynthesis. Its function is as follows. Catalyzes the rearrangement of 1-deoxy-D-xylulose 5-phosphate (DXP) to produce the thiazole phosphate moiety of thiamine. Sulfur is provided by the thiocarboxylate moiety of the carrier protein ThiS. In vitro, sulfur can be provided by H(2)S. The protein is Thiazole synthase of Bacillus cereus (strain ZK / E33L).